The sequence spans 209 residues: MSLLLVIFLLELVVQLVNTIGAKTINNLLWRFYLSIPGSPLAKDFAEQRAKQKEYLQVRHDLNATSSQDEFAKWARLQRKHDKLMDELEKKKSQLDAHRTSFSRKLTIYRWILTRGMQWFLCFWFSSQPMFWLPYGWFPYWVEWLVSFPNAPMGSVSIVVWQSACSGVLALVIEAVMAVVRYTGGTGMQKQRQPVPAAGGAPGTSKKDL.

The Lumenal segment spans residues 1-3; that stretch reads MSL. The helical transmembrane segment at 4-23 threads the bilayer; it reads LLVIFLLELVVQLVNTIGAK. Topologically, residues 24 to 110 are cytoplasmic; it reads TINNLLWRFY…SFSRKLTIYR (87 aa). Residues 74 to 101 adopt a coiled-coil conformation; that stretch reads WARLQRKHDKLMDELEKKKSQLDAHRTS. A helical membrane pass occupies residues 111-131; it reads WILTRGMQWFLCFWFSSQPMF. Residues 132 to 155 are Lumenal-facing; that stretch reads WLPYGWFPYWVEWLVSFPNAPMGS. A helical membrane pass occupies residues 156–172; the sequence is VSIVVWQSACSGVLALV. Topologically, residues 173–209 are cytoplasmic; the sequence is IEAVMAVVRYTGGTGMQKQRQPVPAAGGAPGTSKKDL. Positions 188-209 are disordered; that stretch reads MQKQRQPVPAAGGAPGTSKKDL.

It belongs to the WRB/GET1 family. As to quaternary structure, interacts with GET3.

Its subcellular location is the endoplasmic reticulum membrane. In terms of biological role, required for the post-translational delivery of tail-anchored (TA) proteins to the endoplasmic reticulum. Acts as a membrane receptor for soluble GET3, which recognizes and selectively binds the transmembrane domain of TA proteins in the cytosol. This chain is Protein GET1, found in Chaetomium thermophilum (strain DSM 1495 / CBS 144.50 / IMI 039719) (Thermochaetoides thermophila).